A 570-amino-acid chain; its full sequence is MESFRRFSLLSFIALLAYFAFLASAEHHVHQFVITPTPVKRLCRTHQSITVNGQYPGPTLVVRNGDSLAITVINRARYNISIHWHGIRQLRNPWADGPEYITQCPIRPGQTYTYRFKIEDQEGTLWWHAHSRWLRATVYGALIIYPRLGSPYPFSMPKRDIPILLGEWWDRNPMDVLKQAQFTGAAANVSDAYTINGQPGDLYRCSRAGTIRFPIFPGETVQLRVINAGMNQELFFSVANHQFTVVETDSAYTKPFTTNVIMIGPGQTTNVLLTANQRPGRYYMAARAYNSANAPFDNTTTTAILQYVNAPTRRGRGRGQIAPVFPVLPGFNDTATATAFTNRLRYWKRAPVPQQVDENLFFTVGLGLINCANPNSPRCQGPNGTRFAASMNNMSFVLPRSNSVMQAYYQGTPGIFTTDFPPVPPVQFDYTGNVSRGLWQPIKGTKAYKLKYKSNVQIVLQDTSIVTPENHPMHLHGYQFYVVGSGFGNFNPRTDPARFNLFDPPERNTIGTPPGGWVAIRFVADNPGAWFMHCHIDSHLGWGLAMVFLVENGRGQLQSVQAPPLDLPRC.

A signal peptide spans 1–25; that stretch reads MESFRRFSLLSFIALLAYFAFLASA. 2 Plastocyanin-like domains span residues 33 to 149 and 159 to 310; these read VITP…PRLG and RDIP…YVNA. Asn79 is a glycosylation site (N-linked (GlcNAc...) asparagine). Cu cation-binding residues include His83, His85, His128, and His130. N-linked (GlcNAc...) asparagine glycosylation is found at Asn188, Asn298, Asn332, Asn383, Asn393, and Asn433. In terms of domain architecture, Plastocyanin-like 3 spans 419-554; the sequence is DFPPVPPVQF…AMVFLVENGR (136 aa). Cu cation-binding residues include His471, His474, His476, His533, Cys534, His535, and His539.

The protein belongs to the multicopper oxidase family. The cofactor is Cu cation. In terms of tissue distribution, mostly expressed in roots and siliques.

Its subcellular location is the secreted. The protein resides in the extracellular space. It is found in the apoplast. The enzyme catalyses 4 hydroquinone + O2 = 4 benzosemiquinone + 2 H2O. Functionally, lignin degradation and detoxification of lignin-derived products. In Arabidopsis thaliana (Mouse-ear cress), this protein is Laccase-3 (LAC3).